Here is a 234-residue protein sequence, read N- to C-terminus: Sugar fermentation stimulation protein A (234 aa).

The segment at residues 201–220 (LLSEAQQRGVEILAYKAEIS) is a DNA-binding region (H-T-H motif).

The protein belongs to the SfsA family.

Its function is as follows. Binds to DNA non-specifically. Could be a regulatory factor involved in maltose metabolism. The chain is Sugar fermentation stimulation protein A from Escherichia coli (strain 55989 / EAEC).